Here is a 95-residue protein sequence, read N- to C-terminus: Large ribosomal subunit protein uL23 (95 aa).

It belongs to the universal ribosomal protein uL23 family. Part of the 50S ribosomal subunit. Contacts protein L29, and trigger factor when it is bound to the ribosome.

Its function is as follows. One of the early assembly proteins it binds 23S rRNA. One of the proteins that surrounds the polypeptide exit tunnel on the outside of the ribosome. Forms the main docking site for trigger factor binding to the ribosome. The sequence is that of Large ribosomal subunit protein uL23 from Rubrobacter xylanophilus (strain DSM 9941 / JCM 11954 / NBRC 16129 / PRD-1).